Reading from the N-terminus, the 300-residue chain is C-4 methylsterol oxidase erg25 (300 aa).

The Fatty acid hydroxylase domain occupies 140 to 276; it reads TLFFFLEDTW…FRWWDAVLKT (137 aa). The Histidine box-1 motif lies at 154 to 158; sequence HRLFH. The Histidine box-2 motif lies at 167-171; it reads HKVHH. Residues 186–206 traverse the membrane as a helical segment; that stretch reads PLEIILLGAGTVFVPLMWCYF. The Histidine box-3 motif lies at 251–257; sequence HHDYHHM.

The protein belongs to the sterol desaturase family. Heterotetramer of erg25, erg26, erg27 and erg28. Erg28 acts as a scaffold to tether erg27 and other 4,4-demethylation-related enzymes, forming a demethylation enzyme complex, in the endoplasmic reticulum. Requires Fe cation as cofactor.

It is found in the endoplasmic reticulum membrane. The catalysed reaction is 4,4-dimethyl-5alpha-cholesta-8,24-dien-3beta-ol + 6 Fe(II)-[cytochrome b5] + 3 O2 + 5 H(+) = 4beta-methylzymosterol-4alpha-carboxylate + 6 Fe(III)-[cytochrome b5] + 4 H2O. It catalyses the reaction 4alpha-methylzymosterol + 6 Fe(II)-[cytochrome b5] + 3 O2 + 5 H(+) = 4alpha-carboxyzymosterol + 6 Fe(III)-[cytochrome b5] + 4 H2O. The protein operates within steroid biosynthesis; zymosterol biosynthesis; zymosterol from lanosterol: step 3/6. It functions in the pathway steroid metabolism; ergosterol biosynthesis. Functionally, C-4 methylsterol oxidase; part of the third module of ergosterol biosynthesis pathway that includes by the late steps of the pathway. Erg25 is a catalytic component of the C-4 demethylation complex that catalyzes the three-step monooxygenation required for the demethylation of 4,4-dimethyl and 4alpha-methylsterols. The third module or late pathway involves the ergosterol synthesis itself through consecutive reactions that mainly occur in the endoplasmic reticulum (ER) membrane. Firstly, the squalene synthase erg9 catalyzes the condensation of 2 farnesyl pyrophosphate moieties to form squalene, which is the precursor of all steroids. Secondly, squalene is converted into lanosterol by the consecutive action of the squalene epoxidase erg1 and the lanosterol synthase erg7. The lanosterol 14-alpha-demethylase erg11/cyp1 catalyzes C14-demethylation of lanosterol to produce 4,4'-dimethyl cholesta-8,14,24-triene-3-beta-ol. In the next steps, a complex process involving various demethylation, reduction and desaturation reactions catalyzed by the C-14 reductase erg24 and the C-4 demethylation complex erg25-erg26-erg27 leads to the production of zymosterol. Erg28 likely functions in the C-4 demethylation complex reaction by tethering erg26 and Erg27 to the endoplasmic reticulum or to facilitate interaction between these proteins. Then, the sterol 24-C-methyltransferase erg6 catalyzes the methyl transfer from S-adenosyl-methionine to the C-24 of zymosterol to form fecosterol. The C-8 sterol isomerase erg2 catalyzes the reaction which results in unsaturation at C-7 in the B ring of sterols and thus converts fecosterol to episterol. The sterol-C5-desaturases erg31 and erg32 then catalyze the introduction of a C-5 double bond in the B ring to produce 5-dehydroepisterol. The C-22 sterol desaturase erg5 further converts 5-dehydroepisterol into ergosta-5,7,22,24(28)-tetraen-3beta-ol by forming the C-22(23) double bond in the sterol side chain. Finally, ergosta-5,7,22,24(28)-tetraen-3beta-ol is substrate of the C-24(28) sterol reductase erg4 to produce ergosterol. In the genus Schizosaccharomyces, a second route exists between lanosterol and fecosterol, via the methylation of lanosterol to eburicol by erg6, followed by C14-demethylation by erg11/cyp1 and C4-demethylation by the demethylation complex erg25-erg26-erg27. This Schizosaccharomyces pombe (strain 972 / ATCC 24843) (Fission yeast) protein is C-4 methylsterol oxidase erg25.